A 692-amino-acid chain; its full sequence is Elongation factor G (692 aa).

The tr-type G domain occupies 8–282; that stretch reads EKTRNIGIMA…AVIDYLPSPL (275 aa). GTP-binding positions include 17 to 24, 81 to 85, and 135 to 138; these read AHVDAGKT, DTPGH, and NKMD.

Belongs to the TRAFAC class translation factor GTPase superfamily. Classic translation factor GTPase family. EF-G/EF-2 subfamily.

It localises to the cytoplasm. Its function is as follows. Catalyzes the GTP-dependent ribosomal translocation step during translation elongation. During this step, the ribosome changes from the pre-translocational (PRE) to the post-translocational (POST) state as the newly formed A-site-bound peptidyl-tRNA and P-site-bound deacylated tRNA move to the P and E sites, respectively. Catalyzes the coordinated movement of the two tRNA molecules, the mRNA and conformational changes in the ribosome. This is Elongation factor G from Streptococcus agalactiae serotype Ia (strain ATCC 27591 / A909 / CDC SS700).